The primary structure comprises 392 residues: MDYYSILGISKTASAEEIKKAYRKLAVKYHPDKNPGDAAAEKRFKEVSEAYEVLSDPQKRDSYDRFGKDGPFAGAGGFGGAGGMGNMEDALRTFMGAFGGEFGGGSFFDGLFGGLGEAFGMRSDPAGARQGASKKVHINLTFEEAAHGVEKELVVSGYKSCETCSGQGAVNPQGIKSCERCKGSGQVVQSRGFFSMASTCPECGGEGRIITDPCSSCRGQGRVKDKRSVHVHIPAGVDSGMRLKMEGYGDAGQNGAPSGDLYVFIDVESHPVFERRGDDLILELPIGFVDAALGMKKEIPTLLKTEGSCRLTVPEGIQSGTILKVRNQGFPNVHGKGRGDLLVRISVETPQNLSEEQKELLRTFASTEKAENFPKKRSFLDKIKGFFSDFTV.

One can recognise a J domain in the interval 2–67; it reads DYYSILGISK…QKRDSYDRFG (66 aa). The segment at 148–226 adopts a CR-type zinc-finger fold; it reads GVEKELVVSG…CRGQGRVKDK (79 aa). Positions 161, 164, 178, 181, 200, 203, 214, and 217 each coordinate Zn(2+). CXXCXGXG motif repeat units lie at residues 161-168, 178-185, 200-207, and 214-221; these read CETCSGQG, CERCKGSG, CPECGGEG, and CSSCRGQG.

Belongs to the DnaJ family. As to quaternary structure, homodimer. The cofactor is Zn(2+).

The protein localises to the cytoplasm. Its function is as follows. Participates actively in the response to hyperosmotic and heat shock by preventing the aggregation of stress-denatured proteins and by disaggregating proteins, also in an autonomous, DnaK-independent fashion. Unfolded proteins bind initially to DnaJ; upon interaction with the DnaJ-bound protein, DnaK hydrolyzes its bound ATP, resulting in the formation of a stable complex. GrpE releases ADP from DnaK; ATP binding to DnaK triggers the release of the substrate protein, thus completing the reaction cycle. Several rounds of ATP-dependent interactions between DnaJ, DnaK and GrpE are required for fully efficient folding. Also involved, together with DnaK and GrpE, in the DNA replication of plasmids through activation of initiation proteins. The protein is Chaperone protein DnaJ of Chlamydia pneumoniae (Chlamydophila pneumoniae).